Consider the following 1679-residue polypeptide: Lysophospholipase NTE1 (1679 aa).

Residues 1-20 (MRSMNCTTNNTNNTGQNTKN) show a composition bias toward low complexity. Residues 1–21 (MRSMNCTTNNTNNTGQNTKNS) form a disordered region. The Cytoplasmic segment spans residues 1-49 (MRSMNCTTNNTNNTGQNTKNSLGSSFNSSNYTSYRFQTCLTDQIISEAQ). A helical transmembrane segment spans residues 50 to 70 (TWSLSSLFNFSWVVSYFVMGA). Residues 71–103 (SRMIFRYGWYLATLSLLRIPKWIFFKLHHVQFT) lie on the Lumenal side of the membrane. The helical transmembrane segment at 104 to 124 (LSFWLILFALAVIVFVTYTIM) threads the bilayer. Residues 125–1679 (KERILSQYKR…EFLLHRRNSI (1555 aa)) lie on the Cytoplasmic side of the membrane. The segment covering 261–274 (SDKDHGDETDHSDT) has biased composition (basic and acidic residues). The interval 261–304 (SDKDHGDETDHSDTDGLDDQDRDEEDEEEDDDIDNYDTKSCSSN) is disordered. Residues 275-295 (DGLDDQDRDEEDEEEDDDIDN) show a composition bias toward acidic residues. Ser300 and Ser312 each carry phosphoserine. 2 disordered regions span residues 498-527 (SSGS…KPSD) and 586-672 (DILS…VSPR). Composition is skewed to polar residues over residues 592-606 (PIHN…GINT) and 630-652 (FSSL…LDNT). Residues Ser632, Ser634, Ser653, Ser661, Ser670, Ser680, and Ser739 each carry the phosphoserine modification. Residues 775-800 (KEYTISNKRHNKSKSQDKKKPRAYKE) form a disordered region. Over residues 788-800 (KSQDKKKPRAYKE) the composition is skewed to basic and acidic residues. Phosphothreonine is present on Thr803. A nucleoside 3',5'-cyclic phosphate-binding positions include 803–947 (TPNL…LTKL) and 943–1074 (SLTK…VAKK). Residues 855 to 882 (SSSVVSSMSKPEQVSAQSSHKGENPHHT) form a disordered region. Residues 862 to 873 (MSKPEQVSAQSS) show a composition bias toward polar residues. The 165-residue stretch at 1373-1537 (LVLGGGGARG…VDNLPVTEMR (165 aa)) folds into the PNPLA domain. A GXGXXG motif is present at residues 1377–1382 (GGGARG). A GXSXG motif is present at residues 1404-1408 (GTSIG). The active-site Nucleophile is Ser1406. Catalysis depends on Asp1524, which acts as the Proton acceptor. Positions 1524–1526 (DGG) match the DGA/G motif.

Belongs to the NTE family.

The protein resides in the endoplasmic reticulum membrane. Its subcellular location is the lipid droplet. It carries out the reaction a 1-acyl-sn-glycero-3-phosphocholine + H2O = sn-glycerol 3-phosphocholine + a fatty acid + H(+). The enzyme catalyses a 1,2-diacyl-sn-glycero-3-phosphocholine + 2 H2O = sn-glycerol 3-phosphocholine + 2 a carboxylate + 2 H(+). Positively regulated by SEC14. Inhibited by organophosphorus esters in the order phenyl saligenin phosphate (PSP) &gt; phenyldipentyl phosphinate (PDPP) = diisopropyl fluorophosphate (DFP) &gt; and paraoxon (PXN). Intracellular phospholipase B that catalyzes the double deacylation of phosphatidylcholine (PC) to glycerophosphocholine (GroPCho). Plays an important role in membrane lipid homeostasis. Responsible for the rapid PC turnover in response to inositol, elevated temperatures, or when choline is present in the growth medium. NTE1 activity impacts the repressing transcriptional activity of OPI1, the main regulator of phospholipid synthesis gene transcription. This chain is Lysophospholipase NTE1 (NTE1), found in Saccharomyces cerevisiae (strain ATCC 204508 / S288c) (Baker's yeast).